A 293-amino-acid chain; its full sequence is Pyridoxal 5'-phosphate synthase subunit PdxS (293 aa).

Position 23 (aspartate 23) interacts with D-ribose 5-phosphate. Lysine 80 (schiff-base intermediate with D-ribose 5-phosphate) is an active-site residue. Position 152 (glycine 152) interacts with D-ribose 5-phosphate. Arginine 164 contacts D-glyceraldehyde 3-phosphate. D-ribose 5-phosphate contacts are provided by residues glycine 213 and 234-235 (GS).

The protein belongs to the PdxS/SNZ family. In the presence of PdxT, forms a dodecamer of heterodimers.

The catalysed reaction is aldehydo-D-ribose 5-phosphate + D-glyceraldehyde 3-phosphate + L-glutamine = pyridoxal 5'-phosphate + L-glutamate + phosphate + 3 H2O + H(+). The protein operates within cofactor biosynthesis; pyridoxal 5'-phosphate biosynthesis. In terms of biological role, catalyzes the formation of pyridoxal 5'-phosphate from ribose 5-phosphate (RBP), glyceraldehyde 3-phosphate (G3P) and ammonia. The ammonia is provided by the PdxT subunit. Can also use ribulose 5-phosphate and dihydroxyacetone phosphate as substrates, resulting from enzyme-catalyzed isomerization of RBP and G3P, respectively. This is Pyridoxal 5'-phosphate synthase subunit PdxS from Methanothermobacter thermautotrophicus (strain ATCC 29096 / DSM 1053 / JCM 10044 / NBRC 100330 / Delta H) (Methanobacterium thermoautotrophicum).